The chain runs to 255 residues: 5'-nucleotidase SurE (255 aa).

Positions 8, 9, 40, and 92 each coordinate a divalent metal cation.

This sequence belongs to the SurE nucleotidase family. The cofactor is a divalent metal cation.

The protein resides in the cytoplasm. The catalysed reaction is a ribonucleoside 5'-phosphate + H2O = a ribonucleoside + phosphate. Functionally, nucleotidase that shows phosphatase activity on nucleoside 5'-monophosphates. The protein is 5'-nucleotidase SurE of Brucella suis (strain ATCC 23445 / NCTC 10510).